We begin with the raw amino-acid sequence, 99 residues long: Putative septation protein SpoVG (99 aa).

The protein belongs to the SpoVG family.

Could be involved in septation. The protein is Putative septation protein SpoVG of Exiguobacterium sp. (strain ATCC BAA-1283 / AT1b).